Here is a 2850-residue protein sequence, read N- to C-terminus: Hornerin (2850 aa).

Residues 1-81 form an S-100-like region; it reads MPKLLQGVIT…TEYLLMIFKL (81 aa). EF-hand domains are found at residues 13 to 48 and 49 to 84; these read DVFYQYATQHGEYDTLNKAELKELLENEFHQILKNP and NDPDTVDIILQSLDRDHNKKVDFTEYLLMIFKLVQA. Ca(2+)-binding residues include T27, E32, D62, D64, N66, K68, and E73. 13 tandem repeats follow at residues 97–187, 188–278, 279–369, 370–460, 474–566, 593–683, 685–747, 748–836, 839–875, 876–965, 966–1004, 1007–1097, and 1098–1188. A compositionally biased stretch (basic and acidic residues) spans 100 to 110; sequence KLRDDTHQHQE. Disordered stretches follow at residues 100 to 154 and 166 to 2817; these read KLRD…GTES and SGQH…KGGS. Polar residues predominate over residues 125 to 144; it reads SSFSHSSWSAGENDSYSRNV. Composition is skewed to low complexity over residues 167-192 and 226-248; these read GQHNSYSGQSSSYGEQNSDSHQSSGR and GQSSGFSQHKSSSGQSSGYSQHG. Positions 249–259 are enriched in gly residues; sequence SGSGHSSGYGQ. 2 stretches are compositionally biased toward low complexity: residues 276-308 and 317-421; these read SSGSSSSYGQHGSGSRQSLGHGRQGSGSRQSPS and GHSS…SGSG. Residues 422–433 are compositionally biased toward gly residues; the sequence is QSPGHGQRGSGS. Composition is skewed to low complexity over residues 449 to 465 and 473 to 482; these read SSSSGPYVSGSGYSSGF and EHSSGYTQHG. Positions 483–493 are enriched in gly residues; that stretch reads SGSGHSSGHGQ. Low complexity-rich tracts occupy residues 494-529, 555-661, 670-724, 732-765, 782-806, and 818-871; these read HGSRSGQSSRGERQGSSAGSSSSYGQHGSGSRQSLG, SSSY…QSPS, GHSS…SHSS, RSGQSSRSEQHGSSSGLSSSYGQHGSGSHQSSGH, GSSSGHSSSHGQHGSGTSCSSSCGH, and GQHE…GQHE. Phosphoserine is present on residues S659 and S661. The span at 884 to 900 shows a compositional bias: gly residues; sequence GSGSGQSPGHGQRGSGS. S890 is subject to Phosphoserine. 2 stretches are compositionally biased toward low complexity: residues 901-921 and 931-996; these read GQSPSYGRHGSGSGRSSSSGR and GFGH…SLGH. Phosphoserine is present on residues S993 and S1008. 2 stretches are compositionally biased toward low complexity: residues 1019-1050 and 1057-1115; these read GQSSSYGPYRSGSGWSSSRGPYESGSGHSSGL and SGQS…SSGY. The segment covering 1116-1132 has biased composition (gly residues); the sequence is GRQGSGSGQSPGHGQRG. Composition is skewed to low complexity over residues 1133 to 1156 and 1166 to 1184; these read SGSRQSPSYGRHGSGSGRSSSSGQ and GFGHHESSSGQSSSYSQHG. The span at 1185-1195 shows a compositional bias: gly residues; that stretch reads SGSGHSSGYGQ. R1205 is modified (omega-N-methylarginine). Composition is skewed to low complexity over residues 1211–1232 and 1253–1276; these read SSSGSSSHYGQHGSGSRQSSGH and GHSSSHGQHGSGSGRSSSRGPYES. The stretch at 1215–1305 is repeat 14; sequence SSSHYGQHGS…AYSQHGSGSG (91 aa). A compositionally biased stretch (polar residues) spans 1280–1301; that stretch reads HSSVFGQHESGSGHSSAYSQHG. Composition is skewed to low complexity over residues 1309–1322, 1331–1349, 1370–1390, 1400–1438, and 1445–1466; these read SQGQHGSTSGQSST, GQSSSYGHRGSGSSQSSGY, GHSSSYGQHGSGSGWSSSSGR, GFGHHESSSWQSSGCTQHGSGSGHSSSYEQHGSRSGQSS, and SSSGSSSSYGQHGSGSRQSLGH. 16 repeat units span residues 1332-1422, 1423-1474, 1477-1567, 1568-1658, 1685-1775, 1802-1892, 1893-1944, 1947-2037, 2038-2128, 2155-2245, 2272-2362, 2363-2414, 2417-2507, 2508-2598, 2625-2715, and 2716-2806. Phosphoserine is present on residues S1463 and S1478. Low complexity-rich tracts occupy residues 1489-1520 and 1527-1585; these read GQSSSYSPYGSGSGWSSSRGPYESGSSHSSGL and SGQS…SSGY. Residues 1586 to 1602 show a composition bias toward gly residues; the sequence is GRQGSGSGQSPGHGQRG. Low complexity-rich tracts occupy residues 1603–1626 and 1636–1654; these read SGSRQSPSYGRHGSGSGRSSSSGQ and GFGHHESSSGQSSSYSQHG. Over residues 1655-1665 the composition is skewed to gly residues; it reads SGSGHSSGYGQ. Low complexity predominate over residues 1682–1702; sequence SSRSSSRYGQHGSGSRQSSGH. Phosphoserine occurs at positions 1712 and 1714. A compositionally biased stretch (low complexity) spans 1723–1746; it reads GHSSSHGQHGSGSGRSSSRGPYES. The segment covering 1750 to 1771 has biased composition (polar residues); it reads HSSVFGQHESGSGHSSAYSQHG. Composition is skewed to low complexity over residues 1779–1831, 1840–1860, and 1870–1936; these read SQGQ…QSPS, GHSSSYGQHGSGSGWSSSSGR, and GFGH…SLGH. Phosphoserine is present on residues S1829 and S1831. A phosphoserine mark is found at S1933 and S1948. 2 stretches are compositionally biased toward low complexity: residues 1959–1990 and 1997–2055; these read GQSSSYGPYGSGSGWSSSRGPYESGSGHSSGL and SGQS…SSGY. Over residues 2056-2072 the composition is skewed to gly residues; that stretch reads GRQGSGSGQSPGHGQRG. Low complexity-rich tracts occupy residues 2073-2096 and 2106-2124; these read SGSRQSPSYGRHGSGSGRSSSSGQ and GFGHHESSSGQSSSYSQHG. The segment covering 2125 to 2135 has biased composition (gly residues); the sequence is SGSGHSSGYGQ. Composition is skewed to low complexity over residues 2151–2172 and 2193–2216; these read SSSGSSSRYGQHGSGSRQSSGH and GHSSSHGQHGSGSGRSSSRGPYES. Residues 2220–2241 are compositionally biased toward polar residues; that stretch reads HSSVFGQHESGSGHSSAYSQHG. 4 stretches are compositionally biased toward low complexity: residues 2249–2301, 2310–2330, 2340–2378, and 2385–2406; these read SQGQ…QSPS, GHSSSYGQHGSGSGWSSSSGR, GFGHHESSSWQSSGYTQHGSGSGHSSSYEQHGSRSGQSS, and SSSGSSSSYGQHGSGSRQSLGH. Phosphoserine occurs at positions 2299 and 2301. A phosphoserine mark is found at S2403 and S2418. 2 stretches are compositionally biased toward low complexity: residues 2429–2460 and 2467–2525; these read GQSSSYSPYGSGSGWSSSRGPYESGSGHSSGL and SGQS…SSGY. Positions 2526-2542 are enriched in gly residues; it reads GRQGSGSGQSPGHGQRG. Composition is skewed to low complexity over residues 2543–2566 and 2576–2594; these read SGSRQSPSYGRHGSGSGRSSSSGQ and GFGHHESSSGQSSSYSQHG. The segment covering 2595–2605 has biased composition (gly residues); that stretch reads SGSGHSSGYGQ. The span at 2621 to 2642 shows a compositional bias: low complexity; it reads SSSGSSSHYGQHGSGSRQSSGH. Residues S2652 and S2654 each carry the phosphoserine modification. The segment covering 2663–2682 has biased composition (low complexity); sequence GHSSSHGQHGSGSGRSSSRG. Residues 2698–2711 are compositionally biased toward polar residues; sequence ESGSGHSSAYSQHG. Composition is skewed to low complexity over residues 2719–2732, 2741–2759, and 2795–2816; these read SQGQHGSTSGQSST, GQSSSYGHRGSGSSQSSGY, and SSGYSQHGSGSGQDGYSYCKGG.

Belongs to the S100-fused protein family. It in the N-terminal section; belongs to the S-100 family. Processed during the process of epidermal differentiation. Post-translationally, forms covalent cross-links mediated by transglutaminase TGM3, between glutamine and the epsilon-amino group of lysine residues (in vitro). Expressed in cornified epidermis, psoriatic and regenerating skin after wounding. Found in the upper granular layer and in the entire cornified layer of epidermis.

The protein localises to the cytoplasmic granule. In terms of biological role, component of the epidermal cornified cell envelopes. The protein is Hornerin (HRNR) of Homo sapiens (Human).